The primary structure comprises 711 residues: K(+)-insensitive pyrophosphate-energized proton pump (711 aa).

Helical transmembrane passes span 7–27, 58–78, 85–105, 145–165, and 179–199; these read LIYG…KFIF, IASL…YGHL, ALSF…CSAL, LAVT…YGGL, and IVGF…GGGI. Lys-202 is a substrate binding site. Mg(2+)-binding residues include Asp-205, Asp-209, and Asp-235. 6 helical membrane passes run 251–271, 274–294, 311–331, 343–363, 403–423, and 431–451; these read TAAE…IFGW, ILFP…GIFF, GYFV…KVML, YLLL…FVFL, LPVI…EMAI, and LYGT…ILAM. Residue Asp-459 coordinates Mg(2+). Transmembrane regions (helical) follow at residues 495-515, 535-555, 602-622, and 624-644; these read YAIG…LDEV, EVFI…STAI, EMVI…VILG, and EAAA…ALYL. Positions 652, 678, and 682 each coordinate Ca(2+). Lys-685 serves as a coordination point for substrate. The helical transmembrane segment at 690 to 710 threads the bilayer; that stretch reads PSLHVLIKLISTITLVFVALF.

Belongs to the H(+)-translocating pyrophosphatase (TC 3.A.10) family. K(+)-insensitive subfamily. As to quaternary structure, homodimer. The cofactor is Mg(2+).

Its subcellular location is the cell membrane. It catalyses the reaction diphosphate + H2O + H(+)(in) = 2 phosphate + 2 H(+)(out). In terms of biological role, proton pump that utilizes the energy of pyrophosphate hydrolysis as the driving force for proton movement across the membrane. Generates a proton motive force. The chain is K(+)-insensitive pyrophosphate-energized proton pump from Caldanaerobacter subterraneus subsp. tengcongensis (strain DSM 15242 / JCM 11007 / NBRC 100824 / MB4) (Thermoanaerobacter tengcongensis).